The following is a 158-amino-acid chain: Large ribosomal subunit protein uL13 (158 aa).

Residues 129 to 158 are disordered; sequence PEHGHHAQKPVALDFGAMNNKNGRGNNAGR. Residues 144–158 are compositionally biased toward low complexity; it reads GAMNNKNGRGNNAGR.

This sequence belongs to the universal ribosomal protein uL13 family. Part of the 50S ribosomal subunit.

Its function is as follows. This protein is one of the early assembly proteins of the 50S ribosomal subunit, although it is not seen to bind rRNA by itself. It is important during the early stages of 50S assembly. The chain is Large ribosomal subunit protein uL13 from Anaplasma phagocytophilum (strain HZ).